Consider the following 909-residue polypeptide: Protein translocase subunit SecA (909 aa).

Residues Q87, 105 to 109, and D512 each bind ATP; that span reads GEGKT. A disordered region spans residues 863–909; that stretch reads LVGGGDEDDESIAAHTPMIRDGDKVGRNDPCPCGSGRKYKQCHGKLS. Residues 880–889 show a composition bias toward basic and acidic residues; sequence MIRDGDKVGR. Positions 893, 895, 904, and 905 each coordinate Zn(2+). Positions 899-909 are enriched in basic residues; the sequence is RKYKQCHGKLS.

It belongs to the SecA family. In terms of assembly, monomer and homodimer. Part of the essential Sec protein translocation apparatus which comprises SecA, SecYEG and auxiliary proteins SecDF-YajC and YidC. The cofactor is Zn(2+).

Its subcellular location is the cell inner membrane. It is found in the cytoplasm. It catalyses the reaction ATP + H2O + cellular proteinSide 1 = ADP + phosphate + cellular proteinSide 2.. Part of the Sec protein translocase complex. Interacts with the SecYEG preprotein conducting channel. Has a central role in coupling the hydrolysis of ATP to the transfer of proteins into and across the cell membrane, serving both as a receptor for the preprotein-SecB complex and as an ATP-driven molecular motor driving the stepwise translocation of polypeptide chains across the membrane. This chain is Protein translocase subunit SecA, found in Shewanella putrefaciens (strain CN-32 / ATCC BAA-453).